Here is a 336-residue protein sequence, read N- to C-terminus: tRNA N6-adenosine threonylcarbamoyltransferase (336 aa).

Residues His114 and His118 each coordinate Fe cation. Residues 136–140, Asp169, Gly182, Asp186, and Asn275 contribute to the substrate site; that span reads LVSGG. Asp301 lines the Fe cation pocket.

The protein belongs to the KAE1 / TsaD family. Requires Fe(2+) as cofactor.

Its subcellular location is the cytoplasm. The catalysed reaction is L-threonylcarbamoyladenylate + adenosine(37) in tRNA = N(6)-L-threonylcarbamoyladenosine(37) in tRNA + AMP + H(+). In terms of biological role, required for the formation of a threonylcarbamoyl group on adenosine at position 37 (t(6)A37) in tRNAs that read codons beginning with adenine. Is involved in the transfer of the threonylcarbamoyl moiety of threonylcarbamoyl-AMP (TC-AMP) to the N6 group of A37, together with TsaE and TsaB. TsaD likely plays a direct catalytic role in this reaction. The protein is tRNA N6-adenosine threonylcarbamoyltransferase of Streptococcus pneumoniae (strain JJA).